The sequence spans 286 residues: B3 domain-containing protein REM20 (286 aa).

Positions 9 to 102 form a DNA-binding region, TF-B3; that stretch reads PRFFKVFLVE…TFEVSVFDRW (94 aa). The interval 117 to 161 is disordered; that stretch reads SDSDSDSVVEDEKDSTDVVEDDDDEDEDEDEDDDGSFDEDEEISQ. The span at 119-159 shows a compositional bias: acidic residues; that stretch reads SDSDSVVEDEKDSTDVVEDDDDEDEDEDEDDDGSFDEDEEI.

The protein localises to the nucleus. The sequence is that of B3 domain-containing protein REM20 (REM20) from Arabidopsis thaliana (Mouse-ear cress).